Here is a 342-residue protein sequence, read N- to C-terminus: Pre-mRNA-splicing factor 18 (342 aa).

It belongs to the PRP18 family. In terms of assembly, interacts with the spliceosome. Part of a complex containing U4/U6 snRNPs.

It localises to the nucleus speckle. Functionally, participates in the second step of pre-mRNA splicing. This chain is Pre-mRNA-splicing factor 18 (prpf18), found in Danio rerio (Zebrafish).